A 223-amino-acid polypeptide reads, in one-letter code: Ribose-5-phosphate isomerase A (223 aa).

Substrate contacts are provided by residues 32–35, 85–88, and 98–101; these read TGST, DGAD, and KGGG. Catalysis depends on E107, which acts as the Proton acceptor. A substrate-binding site is contributed by K125.

Belongs to the ribose 5-phosphate isomerase family. Homodimer.

It catalyses the reaction aldehydo-D-ribose 5-phosphate = D-ribulose 5-phosphate. Its pathway is carbohydrate degradation; pentose phosphate pathway; D-ribose 5-phosphate from D-ribulose 5-phosphate (non-oxidative stage): step 1/1. In terms of biological role, catalyzes the reversible conversion of ribose-5-phosphate to ribulose 5-phosphate. The chain is Ribose-5-phosphate isomerase A from Marinomonas sp. (strain MWYL1).